A 314-amino-acid polypeptide reads, in one-letter code: HTH-type transcriptional regulator LeuO (314 aa).

Positions 22–79 constitute an HTH lysR-type domain; sequence VDLNLLTVFDAVMQEQNITRAAHVLGMSQPAVSNAVARLKVMFNDELFVRYGRGIQPT. A DNA-binding region (H-T-H motif) is located at residues 39–58; it reads ITRAAHVLGMSQPAVSNAVA.

The protein belongs to the LysR transcriptional regulatory family.

A global transcription factor. Activates transcription of the 9 following operons; yjjQ-bglJ, yjjP, acrEF, ybdO, yjcRQP, casABCDE12, rhsD-ybbC, fepE and gltF, in most cases it probably interferes with silencing by H-NS and activates transcription. Represses transcription of the 3 following operons; uxaCA, sdaCB and btsT. H-NS repression of the bgl operon, leading to the ability to metabolize some beta-glucosides. It also directly activates the bgl operon. Activation is H-NS and BglJ-RcsB independent. The polypeptide is HTH-type transcriptional regulator LeuO (leuO) (Escherichia coli (strain K12)).